A 485-amino-acid polypeptide reads, in one-letter code: Terminase, large subunit (485 aa).

Residues Q97 and Q99 each contribute to the ATP site. The Walker A motif motif lies at 124 to 131 (TSEFRGKS). Residues 145–150 (FVILDE) carry the Walker B motif motif. Catalysis depends on E150, which acts as the For ATPase activity. Residues 256 to 438 (SNSVFSGLDM…DIVMSLALAY (183 aa)) are nuclease. Positions 294, 347, and 429 each coordinate Mg(2+).

Belongs to the Tequatrovirus large terminase family. In terms of assembly, interacts with the terminase small subunit; the active complex is probably heterooligomeric. Interacts with the portal protein. The cofactor is Mg(2+).

The terminase large subunit acts as an ATP driven molecular motor necessary for viral DNA translocation into empty capsids and as an endonuclease that cuts the viral genome to initiate and to end a packaging reaction The terminase lies at a unique vertex of the procapsid and is composed of two subunits, a small terminase subunit involved in viral DNA recognition (packaging sequence), and a large terminase subunit possessing endonucleolytic and ATPase activities. Both terminase subunits heterooligomerize and are docked on the portal protein to form the packaging machine. The terminase large subunit exhibits endonuclease activity and cleaves the viral genome concatemer. Once the capsid is packaged with the DNA, the terminase complex is substituted by the tail. The chain is Terminase, large subunit from Thermus thermophilus (Thermus thermophilus phage G20c).